The chain runs to 326 residues: Putative replication protein B (326 aa).

Belongs to the ParB family.

The polypeptide is Putative replication protein B (Sinorhizobium fredii (strain NBRC 101917 / NGR234)).